Consider the following 567-residue polypeptide: Asparagine--tRNA ligase, chloroplastic/mitochondrial (567 aa).

A DNA-binding region (OB) is located at residues 113–191; the sequence is NIMGWVRTLR…VELKVEKIIV (79 aa).

This sequence belongs to the class-II aminoacyl-tRNA synthetase family.

It is found in the plastid. The protein resides in the chloroplast. Its subcellular location is the mitochondrion. It catalyses the reaction tRNA(Asn) + L-asparagine + ATP = L-asparaginyl-tRNA(Asn) + AMP + diphosphate + H(+). The polypeptide is Asparagine--tRNA ligase, chloroplastic/mitochondrial (Arabidopsis thaliana (Mouse-ear cress)).